The primary structure comprises 238 residues: Uridylate kinase (238 aa).

12–15 is an ATP binding site; it reads KLSG. Gly-54 contacts UMP. 2 residues coordinate ATP: Gly-55 and Arg-59. Residues Asp-74 and 135–142 contribute to the UMP site; that span reads TGNPFFTT. The ATP site is built by Thr-162, Tyr-168, and Asp-171.

The protein belongs to the UMP kinase family. In terms of assembly, homohexamer.

Its subcellular location is the cytoplasm. It catalyses the reaction UMP + ATP = UDP + ADP. The protein operates within pyrimidine metabolism; CTP biosynthesis via de novo pathway; UDP from UMP (UMPK route): step 1/1. Inhibited by UTP. Its function is as follows. Catalyzes the reversible phosphorylation of UMP to UDP. The protein is Uridylate kinase of Nitrosospira multiformis (strain ATCC 25196 / NCIMB 11849 / C 71).